The sequence spans 136 residues: Large ribosomal subunit protein bL17 (136 aa).

The protein belongs to the bacterial ribosomal protein bL17 family. Part of the 50S ribosomal subunit. Contacts protein L32.

This is Large ribosomal subunit protein bL17 from Rickettsia conorii (strain ATCC VR-613 / Malish 7).